A 613-amino-acid polypeptide reads, in one-letter code: MSRFARLLLIVALFFTNAWAKTVKETLRITWKEGAPNGQARELIYTNGQFPSPTLVWDEDDDIEVTVYNEMAKNVTVHWHGLDQKDTPWSDGTPGLSQRPIQPGNKFVYRFKASPPGNHWYHSHEKMSLVDGLYGAIHIRPKGDRTGLWSQISQDKDDIKAMENAAYDPEYLVVSDWSQYTSEEYWKISTDSGLLVFCLDSILVNGKGEVYCPGQKFLQAELAPGLVEDAFPPGTEVSDKGCFPADLDQVQGGPWNITKRPDLIPPRVQEGCVASRHENATIVVDPSKNNGWVSMHFVAAATTAQITFSVDSHEFWLYEIDGNYVNPRKFVSAVMSAGETFSVMIKLDQEPGKYTMRIPNSGASQVLGGFAEMVYKGCEREEKAGKAYLSYGGNPTSPDVEKNSFFPWQLDTDHMSPWPPNKPRPGNADEEHLLVLGRVGAPYNYTMNTKYLYPVDFQNDDPLLFYPNATRDTENDGLVLRTKNGSWVDLILQVSTLPGDTASFEHFMHKHGSKTWRIGFGTGVWNYTSVEEAIQERPQDFNLETPGLRDTWITAFSIGGEAYWSVFRYFVDNPGPWLFHCHIELHLMGGMGIAILDGVDAWPEHIPEEYQLR.

The N-terminal stretch at 1–20 (MSRFARLLLIVALFFTNAWA) is a signal peptide. Plastocyanin-like domains are found at residues 29–142 (ITWK…IRPK) and 171–359 (YLVV…MRIP). Asn74 carries N-linked (GlcNAc...) asparagine glycosylation. Cu cation-binding residues include His78, His80, His122, and His124. Asn256, Asn279, Asn444, Asn468, and Asn484 each carry an N-linked (GlcNAc...) asparagine glycan. The region spanning 468–598 (NATRDTENDG…GGMGIAILDG (131 aa)) is the Plastocyanin-like 3 domain. The Cu cation site is built by His506, His509, and His511. Residue Asn526 is glycosylated (N-linked (GlcNAc...) asparagine). Cu cation is bound by residues His580, Cys581, His582, and His586.

This sequence belongs to the multicopper oxidase family. Requires Cu cation as cofactor.

The protein resides in the cell surface. It participates in pigment biosynthesis. Functionally, laccase; part of the Pks1 gene cluster that mediates the biosynthesis of an anthraquinone derivative pigment that contributes to conidial pigmentation that provides protection from UV radiation, heat and cold stress. The polyketide synthase Pks1 produces 1-acetyl-2,4,6,8-tetrahydroxy-9,10-anthraquinone though condensation of acetyl-CoA with malonyl-CoA. The dehydratase EthD and the laccase Mlac1 further convert the anthraquinone derivative into the final conidial pigment. This is Laccase 1 from Metarhizium robertsii (strain ARSEF 23 / ATCC MYA-3075) (Metarhizium anisopliae (strain ARSEF 23)).